Here is a 449-residue protein sequence, read N- to C-terminus: MSQVLGKPQPQGEDGGEDQEEDELVGLAGYEDGPESSDAELDSGPEEGESRRNSWMPRSWCSEATRHECWEPGLWRSSHLLGIGGGWRMLRRQRQADFFLDFSDPFSTEVKPRILLMGLRRSGKSSIQKVVFHKMSPSETLFLESTNRICREDVSNSSFVNFQIWDFPGQIDFFDPTFDYEMIFRGTGALIFVIDSQDDYMEALARLHLTVTRAYKVNTDINFEVFIHKVDGLSDDHKIETQRDIHQRANDDLADAGLEKIHLSFYLTSIYDHSIFEAFSKVVQKLIPQLPTLENLLNIFISNSGIEKAFLFDVVSKIYIATDSTPVDMQTYELCCDMIDVVIDISCIYGLKEDGAGAPYDKDSTAIIKLNNTTVLYLKEVTKFLALVCFVREESFERKGLIDYNFHCFRKAIHEVFEVRMKMVKSRKAQSRLPKKTGATPNGTPRVLL.

Residues 1-55 (MSQVLGKPQPQGEDGGEDQEEDELVGLAGYEDGPESSDAELDSGPEEGESRRNSW) form a disordered region. Composition is skewed to acidic residues over residues 14–24 (DGGEDQEEDEL) and 32–47 (DGPE…GPEE). GTP-binding residues include Arg-120, Arg-121, Ser-122, Gly-123, Lys-124, Ser-125, Ser-126, and Thr-140. GDP contacts are provided by Arg-121, Ser-122, Gly-123, Lys-124, Ser-125, Ser-126, Thr-140, Glu-144, and Thr-146. GTP contacts are provided by Thr-146, Gly-169, His-228, Lys-229, and Asp-231. GDP contacts are provided by His-228, Lys-229, Asp-231, Ser-269, and Ile-270. GTP is bound at residue Ile-270. Residues 428–449 (KAQSRLPKKTGATPNGTPRVLL) are disordered.

The protein belongs to the GTR/RAG GTP-binding protein family. As to quaternary structure, forms a heterodimer with RRAGA in a sequence-independent manner and RRAGB. Heterodimerization stabilizes RRAG proteins. The GDP-bound form of RRAGD (in complex with the GTP-bound form of RRAGA or RRAGB), interacts with RPTOR, thereby promoting recruitment of mTORC1 to the lysosomes. Component of the lysosomal folliculin complex (LFC), composed of FLCN, FNIP1 (or FNIP2), RagA/RRAGA or RagB/RRAGB GDP-bound, RagC/RRAGC or RagD/RRAGD GTP-bound, and Ragulator. Interacts with NOL8. Interacts with SH3BP4; the interaction with this negative regulator is most probably direct, preferentially occurs with the inactive GDP-bound form of RRAGD and is negatively regulated by amino acids. The Rag heterodimer interacts with SLC38A9; the probable amino acid sensor. Interacts with SESN1, SESN2 and SESN3. The GDP-bound form interacts with TFEB. The GDP-bound form interacts with TFE3. As to expression, expressed in the distal tubule of the kidney.

The protein resides in the cytoplasm. It localises to the nucleus. Its subcellular location is the lysosome membrane. The catalysed reaction is GTP + H2O = GDP + phosphate + H(+). Its activity is regulated as follows. The activation of RagD/RRAGD is mediated by a GTPase activating protein (GAP). In high-amino acid conditions, activated by GTPase activating protein FLCN that stimulates RRAGD GTPase activity to turn it into its active GDP-bound form. In response to amino acid depletion, the GATOR1 complex inactivates RagC/RRAGC by securing the GTP-bound inactive form. Functionally, guanine nucleotide-binding protein that plays a crucial role in the cellular response to amino acid availability through regulation of the mTORC1 signaling cascade. Forms heterodimeric Rag complexes with RagA/RRAGA or RagB/RRAGB and cycles between an inactive GTP-bound and an active GDP-bound form: RagD/RRAGD is in its active form when GDP-bound RagD/RRAGD forms a complex with GTP-bound RagA/RRAGA (or RagB/RRAGB) and in an inactive form when GTP-bound RagD/RRAGD heterodimerizes with GDP-bound RagA/RRAGA (or RagB/RRAGB). In its active form, promotes the recruitment of mTORC1 to the lysosomes and its subsequent activation by the GTPase RHEB. This is a crucial step in the activation of the MTOR signaling cascade by amino acids. Also plays a central role in the non-canonical mTORC1 complex, which acts independently of RHEB and specifically mediates phosphorylation of MiT/TFE factors TFEB and TFE3: GDP-bound RagD/RRAGD mediates recruitment of MiT/TFE factors TFEB and TFE3. The chain is Ras-related GTP-binding protein D from Mus musculus (Mouse).